The primary structure comprises 203 residues: Glycerol-3-phosphate acyltransferase (203 aa).

Helical transmembrane passes span M1–I21, W84–G104, I117–I137, and L157–L179.

It belongs to the PlsY family. Probably interacts with PlsX.

It localises to the cell inner membrane. The enzyme catalyses an acyl phosphate + sn-glycerol 3-phosphate = a 1-acyl-sn-glycero-3-phosphate + phosphate. It participates in lipid metabolism; phospholipid metabolism. In terms of biological role, catalyzes the transfer of an acyl group from acyl-phosphate (acyl-PO(4)) to glycerol-3-phosphate (G3P) to form lysophosphatidic acid (LPA). This enzyme utilizes acyl-phosphate as fatty acyl donor, but not acyl-CoA or acyl-ACP. The protein is Glycerol-3-phosphate acyltransferase of Synechococcus sp. (strain CC9605).